A 163-amino-acid chain; its full sequence is Nucleotide-binding protein Mvan_0997 (163 aa).

The protein belongs to the YajQ family.

Its function is as follows. Nucleotide-binding protein. This Mycolicibacterium vanbaalenii (strain DSM 7251 / JCM 13017 / BCRC 16820 / KCTC 9966 / NRRL B-24157 / PYR-1) (Mycobacterium vanbaalenii) protein is Nucleotide-binding protein Mvan_0997.